The sequence spans 429 residues: Adenylosuccinate synthetase (429 aa).

GTP-binding positions include 12–18 (GDEGKGK) and 40–42 (GHT). Asp13 serves as the catalytic Proton acceptor. Residues Asp13 and Gly40 each coordinate Mg(2+). IMP contacts are provided by residues 13–16 (DEGK), 38–41 (NAGH), Thr129, Arg143, Gln224, Thr239, and Arg303. His41 (proton donor) is an active-site residue. 299–305 (ATTGRRR) serves as a coordination point for substrate. Residues Arg305, 331–333 (KLD), and 413–415 (SVG) contribute to the GTP site.

The protein belongs to the adenylosuccinate synthetase family. In terms of assembly, homodimer. Requires Mg(2+) as cofactor.

It localises to the cytoplasm. The enzyme catalyses IMP + L-aspartate + GTP = N(6)-(1,2-dicarboxyethyl)-AMP + GDP + phosphate + 2 H(+). Its pathway is purine metabolism; AMP biosynthesis via de novo pathway; AMP from IMP: step 1/2. In terms of biological role, plays an important role in the de novo pathway of purine nucleotide biosynthesis. Catalyzes the first committed step in the biosynthesis of AMP from IMP. In Desulforapulum autotrophicum (strain ATCC 43914 / DSM 3382 / VKM B-1955 / HRM2) (Desulfobacterium autotrophicum), this protein is Adenylosuccinate synthetase.